A 148-amino-acid polypeptide reads, in one-letter code: Lipid droplet organization protein LDO16 (148 aa).

Topologically, residues 1–7 (MVSTATF) are cytoplasmic. The chain crosses the membrane as a helical span at residues 8–28 (FFFVYLTLFVVIGFFSSLFII). Residue Pro-29 is a topological domain, lumenal. Residues 30 to 50 (LLGISFVFAIGVVSFGFCSNM) traverse the membrane as a helical segment. Over 51 to 148 (SFKMAQLIYV…NKAGNKFQLS (98 aa)) the chain is Cytoplasmic. Residues 83-110 (QEPQEPLSTLRPVSNPTIPSPLRQTARP) are disordered. Over residues 93-109 (RPVSNPTIPSPLRQTAR) the composition is skewed to polar residues. Position 102 is a phosphoserine (Ser-102).

The protein belongs to the OSW5 family. In terms of assembly, interacts specifically with the seipin complex FLD1-LDB16. Only a fraction appears to associate with the seipin core components, suggesting that it may be an ancillary subunit of the complex. Found to interact with many mitochondrial and peroxisomal proteins.

It is found in the endoplasmic reticulum membrane. Its subcellular location is the lipid droplet. Functionally, involved in lipid droplet (LD) organization. Functions primarily upon nutrient depletion, facilitating LD consumption by lipophagy. Required for correct LD distribution during entry into stationary phase, where LDs accumulate at nucleus-vacuole junction (NVJ) contact sites. Involved in membrane interaction in a manner similar to those of SNARE proteins, binding to partners present in mitochondria or peroxisomes. Its partner on the mitochondrion side might be TOM22, a mitochondrial outer membrane protein, linking lipid droplets and mitochondria by protein-protein interaction. Involved in spore wall assembly. The protein is Lipid droplet organization protein LDO16 of Saccharomyces cerevisiae (strain ATCC 204508 / S288c) (Baker's yeast).